A 378-amino-acid polypeptide reads, in one-letter code: DNA primase small subunit PriS (378 aa).

Catalysis depends on residues Asp-98, Asp-100, and Asp-282.

It belongs to the eukaryotic-type primase small subunit family. Heterodimer of a small subunit (PriS) and a large subunit (PriL). Mg(2+) serves as cofactor. Requires Mn(2+) as cofactor.

In terms of biological role, catalytic subunit of DNA primase, an RNA polymerase that catalyzes the synthesis of short RNA molecules used as primers for DNA polymerase during DNA replication. The small subunit contains the primase catalytic core and has DNA synthesis activity on its own. Binding to the large subunit stabilizes and modulates the activity, increasing the rate of DNA synthesis while decreasing the length of the DNA fragments, and conferring RNA synthesis capability. The DNA polymerase activity may enable DNA primase to also catalyze primer extension after primer synthesis. May also play a role in DNA repair. The polypeptide is DNA primase small subunit PriS (Methanosphaerula palustris (strain ATCC BAA-1556 / DSM 19958 / E1-9c)).